A 357-amino-acid polypeptide reads, in one-letter code: DNA replication and repair protein RecF (357 aa).

30 to 37 is a binding site for ATP; it reads GANGSGKT.

This sequence belongs to the RecF family.

It is found in the cytoplasm. In terms of biological role, the RecF protein is involved in DNA metabolism; it is required for DNA replication and normal SOS inducibility. RecF binds preferentially to single-stranded, linear DNA. It also seems to bind ATP. In Salmonella heidelberg (strain SL476), this protein is DNA replication and repair protein RecF.